The primary structure comprises 396 residues: Elongation factor Tu (396 aa).

In terms of domain architecture, tr-type G spans 10 to 206 (KPHVNVGTIG…ALDTYIPTPE (197 aa)). Residues 19 to 26 (GHVDHGKT) form a G1 region. 19–26 (GHVDHGKT) serves as a coordination point for GTP. Thr26 lines the Mg(2+) pocket. The interval 60–64 (GITIN) is G2. The interval 81–84 (DCPG) is G3. GTP contacts are provided by residues 81-85 (DCPGH) and 136-139 (NKCD). The interval 136–139 (NKCD) is G4. The tract at residues 174 to 176 (SAK) is G5.

It belongs to the TRAFAC class translation factor GTPase superfamily. Classic translation factor GTPase family. EF-Tu/EF-1A subfamily. In terms of assembly, monomer.

It is found in the cytoplasm. It carries out the reaction GTP + H2O = GDP + phosphate + H(+). In terms of biological role, GTP hydrolase that promotes the GTP-dependent binding of aminoacyl-tRNA to the A-site of ribosomes during protein biosynthesis. The polypeptide is Elongation factor Tu (Burkholderia vietnamiensis (strain G4 / LMG 22486) (Burkholderia cepacia (strain R1808))).